The sequence spans 449 residues: Asparagine--tRNA ligase (449 aa).

It belongs to the class-II aminoacyl-tRNA synthetase family. In terms of assembly, homodimer.

The protein localises to the cytoplasm. The enzyme catalyses tRNA(Asn) + L-asparagine + ATP = L-asparaginyl-tRNA(Asn) + AMP + diphosphate + H(+). In Mesomycoplasma hyopneumoniae (strain 232) (Mycoplasma hyopneumoniae), this protein is Asparagine--tRNA ligase.